The chain runs to 47 residues: MYMLTIGLLTALGLAVGASFGKALGVAVGSYFTACIIIGIIKGALRK.

Positions 1-23 are cleaved as a signal peptide; sequence MYMLTIGLLTALGLAVGASFGKA. A helical membrane pass occupies residues 24 to 43; sequence LGVAVGSYFTACIIIGIIKG.

The protein resides in the host membrane. This Escherichia phage T7 (Bacteriophage T7) protein is Protein 0.5.